The sequence spans 369 residues: C-C chemokine receptor type 9 (369 aa).

The Extracellular portion of the chain corresponds to 1–48; it reads MMPTELTSLIPGMFDDFSYDSTASTDDYMNLNFSSFFCKKNNVRQFAS. An N-linked (GlcNAc...) asparagine glycan is attached at Asn32. 2 cysteine pairs are disulfide-bonded: Cys38/Cys289 and Cys119/Cys198. Residues 49-74 traverse the membrane as a helical segment; the sequence is HFLPPLYWLVFIVGTLGNSLVILVYW. Residues 75–85 lie on the Cytoplasmic side of the membrane; sequence YCTRVKTMTDM. The helical transmembrane segment at 86–109 threads the bilayer; that stretch reads FLLNLAIADLLFLATLPFWAIAAA. The Extracellular portion of the chain corresponds to 110 to 120; that stretch reads GQWMFQTFMCK. Residues 121-150 form a helical membrane-spanning segment; sequence VVNSMYKMNFYSCVLLIMCISVDRYIAIVQ. Over 151-159 the chain is Cytoplasmic; it reads AMKAQVWRQ. Residues 160–185 form a helical membrane-spanning segment; it reads KRLLYSKMVCITIWVMAAVLCTPEIL. The Extracellular portion of the chain corresponds to 186–208; it reads YSQVSGESGIATCTMVYPKDKNA. A helical membrane pass occupies residues 209 to 243; the sequence is KLKSAVLILKVTLGFFLPFMVMAFCYTIIIHTLVQ. The Cytoplasmic segment spans residues 244–248; it reads AKKSS. Residues 249–283 traverse the membrane as a helical segment; it reads KHKALKVTITVLTVFIMSQFPYNSILVVQAVDAYA. Residues 284–290 lie on the Extracellular side of the membrane; sequence MFISNCT. Residues 291-321 form a helical membrane-spanning segment; the sequence is ISTNIDICFQVTQTIAFFHSCLNPVLYVFVG. The Cytoplasmic segment spans residues 322–369; the sequence is ERFRRDLVKTLKNLGCISQAQWVSFTRREGSLKLSSMLLETTSGALSL.

It belongs to the G-protein coupled receptor 1 family. Highly expressed in the thymus and low in lymph nodes and spleen.

The protein resides in the cell membrane. Its function is as follows. Receptor for chemokine SCYA25/TECK. Subsequently transduces a signal by increasing the intracellular calcium ions level. This is C-C chemokine receptor type 9 (Ccr9) from Mus musculus (Mouse).